Consider the following 201-residue polypeptide: 3-isopropylmalate dehydratase small subunit (201 aa).

This sequence belongs to the LeuD family. LeuD type 1 subfamily. As to quaternary structure, heterodimer of LeuC and LeuD.

The enzyme catalyses (2R,3S)-3-isopropylmalate = (2S)-2-isopropylmalate. The protein operates within amino-acid biosynthesis; L-leucine biosynthesis; L-leucine from 3-methyl-2-oxobutanoate: step 2/4. Catalyzes the isomerization between 2-isopropylmalate and 3-isopropylmalate, via the formation of 2-isopropylmaleate. This is 3-isopropylmalate dehydratase small subunit from Micrococcus luteus (strain ATCC 4698 / DSM 20030 / JCM 1464 / CCM 169 / CCUG 5858 / IAM 1056 / NBRC 3333 / NCIMB 9278 / NCTC 2665 / VKM Ac-2230) (Micrococcus lysodeikticus).